A 496-amino-acid chain; its full sequence is Probable cytosol aminopeptidase (496 aa).

Positions 266 and 271 each coordinate Mn(2+). Residue Lys-278 is part of the active site. 3 residues coordinate Mn(2+): Asp-290, Asp-349, and Glu-351. Arg-353 is an active-site residue.

This sequence belongs to the peptidase M17 family. Requires Mn(2+) as cofactor.

The protein localises to the cytoplasm. The catalysed reaction is Release of an N-terminal amino acid, Xaa-|-Yaa-, in which Xaa is preferably Leu, but may be other amino acids including Pro although not Arg or Lys, and Yaa may be Pro. Amino acid amides and methyl esters are also readily hydrolyzed, but rates on arylamides are exceedingly low.. The enzyme catalyses Release of an N-terminal amino acid, preferentially leucine, but not glutamic or aspartic acids.. In terms of biological role, presumably involved in the processing and regular turnover of intracellular proteins. Catalyzes the removal of unsubstituted N-terminal amino acids from various peptides. The protein is Probable cytosol aminopeptidase of Trichodesmium erythraeum (strain IMS101).